Reading from the N-terminus, the 455-residue chain is Zinc finger SWIM domain-containing protein 1 (455 aa).

The segment at 264-288 (ASLSLAETPQDSHTPSEASAENPNT) is disordered. The SWIM-type zinc finger occupies 333-375 (MSIQILEDTHTVQPQPPASCSCYFNQAFHLPCRHILAMLSARQ).

The sequence is that of Zinc finger SWIM domain-containing protein 1 (Zswim1) from Mus musculus (Mouse).